The primary structure comprises 97 residues: Acylphosphatase (97 aa).

The region spanning 3 to 97 (KVKMIVSGRV…PDFTDFNIKY (95 aa)) is the Acylphosphatase-like domain. Active-site residues include arginine 18 and asparagine 36.

The protein belongs to the acylphosphatase family.

The enzyme catalyses an acyl phosphate + H2O = a carboxylate + phosphate + H(+). The chain is Acylphosphatase (acyP) from Lactococcus lactis subsp. lactis (strain IL1403) (Streptococcus lactis).